The following is a 270-amino-acid chain: MVAYENVLANKASSGRLCKALGIRLVTNPLVVQLAKNAGFDALFIDLEHSTLSLADASAIACAGLLSGLTPFVRVPYQCGMGFVQQVLDGGAMGIIFPHVHTAADARAAVDTCKFPPHGRRSMWGQQPVLGLRVTPLHKIAEVCDRVASSVVVMIEAADSIEQADAIAAVEGVDVLLVGCIDLSTDMGIAGNFESKRFRAALEAVSAACHRHGKLMGLAGLYNNRKLQEWAVHSLRARFILCQQDSNLLALGAMECAGAVASIQLDRCPD.

His49 serves as the catalytic Proton acceptor. Residues Glu156 and Asp182 each contribute to the a divalent metal cation site. Asp182 contributes to the substrate binding site.

It belongs to the HpcH/HpaI aldolase family. As to quaternary structure, homohexamer; trimer of dimers. Co(2+) is required as a cofactor. Requires Mn(2+) as cofactor. It depends on Zn(2+) as a cofactor. Fe(2+) serves as cofactor. The cofactor is Mg(2+).

The enzyme catalyses 4-hydroxy-4-methyl-2-oxoglutarate = 2 pyruvate. It participates in secondary metabolite biosynthesis. 4-hydroxy-4-methyl-2-oxoglutarate aldolase; part of the gene cluster that mediates the biosynthesis of the tetramic acids Sch210971 and Sch210972, potential anti-HIV fungal natural product that contain a decalin core. The PKS module of tasS together with the enoylreductase tasC catalyze the formation of the polyketide unit which is then conjugated to 4-hydroxyl-4-methyl glutamate (HMG) by the condensation domain of the tasS NRPS module. One unique structural feature of Sch210971 and Sch210972 is the tetramic acid motif proposed to be derived from the non-proteinogenic amino acid HMG, by a Dieckmann-type condensation catalyzed by the reductase domain of tasS. The aldolase tasA catalyzes the aldol condensation of 2 molecules of pyruvic acid to yield the intermediate 4-hydroxyl-4-methyl-2-oxoglutarate (HMOG), which can then be stereoselectively transaminated, may be by tasG, to form HMG. The Diels-Alderase tas3 then uses the Dieckmann product of tasS as substrate and catalyzes the Diels-Alder cycloaddition to form the decalin ring of Sch210971 and Sch210972. The sequence is that of 4-hydroxy-4-methyl-2-oxoglutarate aldolase tasA from Hapsidospora irregularis.